The primary structure comprises 388 residues: Succinate--CoA ligase [ADP-forming] subunit beta (388 aa).

Residues 9-244 enclose the ATP-grasp domain; sequence KQLFARYGLP…QSQEDPREAQ (236 aa). ATP-binding positions include Lys-46, 53 to 55, Glu-99, Thr-102, and Glu-107; that span reads GRG. Positions 199 and 213 each coordinate Mg(2+). Substrate contacts are provided by residues Asn-264 and 321 to 323; that span reads GIV.

This sequence belongs to the succinate/malate CoA ligase beta subunit family. In terms of assembly, heterotetramer of two alpha and two beta subunits. The cofactor is Mg(2+).

The catalysed reaction is succinate + ATP + CoA = succinyl-CoA + ADP + phosphate. The enzyme catalyses GTP + succinate + CoA = succinyl-CoA + GDP + phosphate. It participates in carbohydrate metabolism; tricarboxylic acid cycle; succinate from succinyl-CoA (ligase route): step 1/1. Its function is as follows. Succinyl-CoA synthetase functions in the citric acid cycle (TCA), coupling the hydrolysis of succinyl-CoA to the synthesis of either ATP or GTP and thus represents the only step of substrate-level phosphorylation in the TCA. The beta subunit provides nucleotide specificity of the enzyme and binds the substrate succinate, while the binding sites for coenzyme A and phosphate are found in the alpha subunit. The polypeptide is Succinate--CoA ligase [ADP-forming] subunit beta (Klebsiella pneumoniae (strain 342)).